The following is a 207-amino-acid chain: Guanylate kinase (207 aa).

A Guanylate kinase-like domain is found at 6–185 (GLLIVLSGPS…AKNRIQCIVE (180 aa)). 13–20 (GPSGVGKG) contributes to the ATP binding site.

This sequence belongs to the guanylate kinase family.

The protein resides in the cytoplasm. It catalyses the reaction GMP + ATP = GDP + ADP. In terms of biological role, essential for recycling GMP and indirectly, cGMP. The protein is Guanylate kinase of Staphylococcus aureus (strain Mu50 / ATCC 700699).